The following is a 362-amino-acid chain: MTELLKTPIHPLYAKYGAKTIDFGGWDLPVQFAGIKAEHEAVRTDAGLFDVSHMGEILVEGPDSTSYLQYLLTNDIEKIKIGKAQYNIMCYETGGTVDDLVVYKKSETEYILVVNAANTAKDFEWMVKNIQGDVSVTNVSSEYGQLALQGPNAEKILAKLTDVDLSSISFFGFVEDADVAGVKTIISRSGYTGEDGFEIYMPSADAGKVFEAILAEGVAPIGLGARDTLRLEAVLALYGQELSKDITPLEAGLNFAVKLKKEADFIGKEALIKQKEAGLNRKLVGIELIERGIPRHDYPVFLNDEEIGIVTSGTQSPTLGTNIGLALIDTAYTELGQEVEVGIRNKKIKAKIVPTPFYKRAK.

Belongs to the GcvT family. The glycine cleavage system is composed of four proteins: P, T, L and H.

It catalyses the reaction N(6)-[(R)-S(8)-aminomethyldihydrolipoyl]-L-lysyl-[protein] + (6S)-5,6,7,8-tetrahydrofolate = N(6)-[(R)-dihydrolipoyl]-L-lysyl-[protein] + (6R)-5,10-methylene-5,6,7,8-tetrahydrofolate + NH4(+). The glycine cleavage system catalyzes the degradation of glycine. This Listeria monocytogenes serotype 4a (strain HCC23) protein is Aminomethyltransferase.